Consider the following 329-residue polypeptide: GTPase Obg (329 aa).

The Obg domain occupies 2-160 (YNFKDSVSIT…LNVRLELFLV (159 aa)). In terms of domain architecture, OBG-type G spans 161–327 (ADIGLVGPPN…LIKEFFILAK (167 aa)). GTP-binding positions include 167-174 (GPPNAGKS), 192-196 (FTTKI), 213-216 (DIPG), 280-283 (NKLD), and 308-310 (SIY). 2 residues coordinate Mg(2+): S174 and T194.

Belongs to the TRAFAC class OBG-HflX-like GTPase superfamily. OBG GTPase family. As to quaternary structure, monomer. The cofactor is Mg(2+).

The protein localises to the cytoplasm. An essential GTPase which binds GTP, GDP and possibly (p)ppGpp with moderate affinity, with high nucleotide exchange rates and a fairly low GTP hydrolysis rate. Plays a role in control of the cell cycle, stress response, ribosome biogenesis and in those bacteria that undergo differentiation, in morphogenesis control. This is GTPase Obg from Borrelia garinii subsp. bavariensis (strain ATCC BAA-2496 / DSM 23469 / PBi) (Borreliella bavariensis).